The sequence spans 828 residues: Glycerol-3-phosphate acyltransferase 1, mitochondrial (828 aa).

Residues 1-87 (MEESSVTIGT…FFNPSIPSLG (87 aa)) lie on the Cytoplasmic side of the membrane. An important for mitochondrial localization region spans residues 80 to 120 (NPSIPSLGLRNVIYINETHTRHRGWLARRLSYILFVQERDV). The stretch at 88 to 118 (LRNVIYINETHTRHRGWLARRLSYILFVQER) is an intramembrane region. Residues 119-828 (DVHKGMFATS…LEYILSFVVL (710 aa)) lie on the Cytoplasmic side of the membrane. An HXXXXD motif motif is present at residues 230–235 (HRSHID). Residues Arg-278, Arg-279, Lys-288, Arg-293, and Arg-328 each coordinate CoA. Ser-380 carries the phosphoserine modification. Arg-462 is a binding site for CoA. Phosphoserine is present on residues Ser-688 and Ser-695. N6-acetyllysine occurs at positions 780 and 784.

It belongs to the GPAT/DAPAT family.

It is found in the mitochondrion outer membrane. It catalyses the reaction sn-glycerol 3-phosphate + an acyl-CoA = a 1-acyl-sn-glycero-3-phosphate + CoA. The catalysed reaction is sn-glycerol 3-phosphate + hexadecanoyl-CoA = 1-hexadecanoyl-sn-glycero-3-phosphate + CoA. It carries out the reaction (9Z,12Z)-octadecadienoyl-CoA + sn-glycerol 3-phosphate = 1-(9Z,12Z)-octadecadienoyl-sn-glycero-3-phosphate + CoA. The enzyme catalyses sn-glycerol 3-phosphate + (9Z)-octadecenoyl-CoA = 1-(9Z-octadecenoyl)-sn-glycero-3-phosphate + CoA. It catalyses the reaction sn-glycerol 3-phosphate + octadecanoyl-CoA = 1-octadecanoyl-sn-glycero-3-phosphate + CoA. The catalysed reaction is dodecanoyl-CoA + sn-glycerol 3-phosphate = 1-dodecanoyl-sn-glycerol 3-phosphate + CoA. It carries out the reaction 1-acyl-sn-glycero-3-phospho-(1'-sn-glycerol) + an acyl-CoA = a 1,2-diacyl-sn-glycero-3-phospho-(1'-sn-glycerol) + CoA. Its pathway is phospholipid metabolism; CDP-diacylglycerol biosynthesis; CDP-diacylglycerol from sn-glycerol 3-phosphate: step 1/3. Its function is as follows. Mitochondrial membrane protein that catalyzes the essential first step of biosynthesis of glycerolipids such as triglycerides, phosphatidic acids and lysophosphatidic acids. Esterifies acyl-group from acyl-coenzyme A (acyl-CoA) to the sn-1 position of glycerol-3-phosphate, to produce lysophosphatidic acid. Has a narrow hydrophobic binding cleft that selects for a linear acyl chain. Catalytic activity is higher for substrates with a 16-carbon acyl chain. The protein is Glycerol-3-phosphate acyltransferase 1, mitochondrial of Rattus norvegicus (Rat).